We begin with the raw amino-acid sequence, 319 residues long: Transaldolase (319 aa).

The active-site Schiff-base intermediate with substrate is the Lys-126.

It belongs to the transaldolase family. Type 1 subfamily. As to quaternary structure, homodimer.

Its subcellular location is the cytoplasm. It carries out the reaction D-sedoheptulose 7-phosphate + D-glyceraldehyde 3-phosphate = D-erythrose 4-phosphate + beta-D-fructose 6-phosphate. The protein operates within carbohydrate degradation; pentose phosphate pathway; D-glyceraldehyde 3-phosphate and beta-D-fructose 6-phosphate from D-ribose 5-phosphate and D-xylulose 5-phosphate (non-oxidative stage): step 2/3. Functionally, transaldolase is important for the balance of metabolites in the pentose-phosphate pathway. The protein is Transaldolase of Bordetella avium (strain 197N).